The primary structure comprises 697 residues: Glycine--tRNA ligase beta subunit (697 aa).

The protein belongs to the class-II aminoacyl-tRNA synthetase family. As to quaternary structure, tetramer of two alpha and two beta subunits.

The protein localises to the cytoplasm. The catalysed reaction is tRNA(Gly) + glycine + ATP = glycyl-tRNA(Gly) + AMP + diphosphate. This chain is Glycine--tRNA ligase beta subunit, found in Ralstonia nicotianae (strain ATCC BAA-1114 / GMI1000) (Ralstonia solanacearum).